We begin with the raw amino-acid sequence, 346 residues long: Blue-light-activated histidine kinase 2 (346 aa).

One can recognise a PAS domain in the interval 8-82 (HDKEAWGRLP…KAIRNCEEVE (75 aa)). An S-4a-FMN cysteine modification is found at Cys55. In terms of domain architecture, PAC spans 79-133 (EEVEETIYNYRADGEGFWNHLLMGPLEDQDEKCRYFVGIQVDMGQSESPDRATEL). One can recognise a Histidine kinase domain in the interval 139–334 (EVQHRVKNHL…IVNIDIPLSQ (196 aa)). His142 is subject to Phosphohistidine; by autocatalysis.

Post-translationally, FMN binds covalently to cysteine after exposure to blue light and this bond is spontaneously broken in the dark.

The enzyme catalyses ATP + protein L-histidine = ADP + protein N-phospho-L-histidine.. Functionally, photosensitive kinase that is involved in increased bacterial virulence upon exposure to light. The polypeptide is Blue-light-activated histidine kinase 2 (Erythrobacter litoralis (strain HTCC2594)).